The chain runs to 188 residues: Elongation factor P (188 aa).

Belongs to the elongation factor P family.

Its subcellular location is the cytoplasm. The protein operates within protein biosynthesis; polypeptide chain elongation. In terms of biological role, involved in peptide bond synthesis. Stimulates efficient translation and peptide-bond synthesis on native or reconstituted 70S ribosomes in vitro. Probably functions indirectly by altering the affinity of the ribosome for aminoacyl-tRNA, thus increasing their reactivity as acceptors for peptidyl transferase. The polypeptide is Elongation factor P (efp) (Ureaplasma parvum serovar 3 (strain ATCC 700970)).